Reading from the N-terminus, the 494-residue chain is Guanosine-5'-triphosphate,3'-diphosphate pyrophosphatase (494 aa).

It belongs to the GppA/Ppx family. GppA subfamily.

The catalysed reaction is guanosine 3'-diphosphate 5'-triphosphate + H2O = guanosine 3',5'-bis(diphosphate) + phosphate + H(+). Its pathway is purine metabolism; ppGpp biosynthesis; ppGpp from GTP: step 2/2. Functionally, catalyzes the conversion of pppGpp to ppGpp. Guanosine pentaphosphate (pppGpp) is a cytoplasmic signaling molecule which together with ppGpp controls the 'stringent response', an adaptive process that allows bacteria to respond to amino acid starvation, resulting in the coordinated regulation of numerous cellular activities. This chain is Guanosine-5'-triphosphate,3'-diphosphate pyrophosphatase, found in Shigella sonnei (strain Ss046).